The chain runs to 424 residues: uncharacterized protein (424 aa).

Lys259 is subject to N6-(pyridoxal phosphate)lysine.

This sequence belongs to the class-III pyridoxal-phosphate-dependent aminotransferase family. Requires pyridoxal 5'-phosphate as cofactor.

This is an uncharacterized protein from Archaeoglobus fulgidus (strain ATCC 49558 / DSM 4304 / JCM 9628 / NBRC 100126 / VC-16).